The following is a 399-amino-acid chain: Succinyl-diaminopimelate desuccinylase (399 aa).

Zn(2+) is bound at residue histidine 80. The active site involves aspartate 82. Residue aspartate 113 coordinates Zn(2+). The active-site Proton acceptor is glutamate 147. Zn(2+) contacts are provided by glutamate 148, glutamate 176, and histidine 366.

Belongs to the peptidase M20A family. DapE subfamily. In terms of assembly, homodimer. The cofactor is Zn(2+). It depends on Co(2+) as a cofactor.

It carries out the reaction N-succinyl-(2S,6S)-2,6-diaminopimelate + H2O = (2S,6S)-2,6-diaminopimelate + succinate. The protein operates within amino-acid biosynthesis; L-lysine biosynthesis via DAP pathway; LL-2,6-diaminopimelate from (S)-tetrahydrodipicolinate (succinylase route): step 3/3. Its function is as follows. Catalyzes the hydrolysis of N-succinyl-L,L-diaminopimelic acid (SDAP), forming succinate and LL-2,6-diaminopimelate (DAP), an intermediate involved in the bacterial biosynthesis of lysine and meso-diaminopimelic acid, an essential component of bacterial cell walls. This chain is Succinyl-diaminopimelate desuccinylase, found in Colwellia psychrerythraea (strain 34H / ATCC BAA-681) (Vibrio psychroerythus).